Consider the following 353-residue polypeptide: UDP-N-acetylglucosamine--N-acetylmuramyl-(pentapeptide) pyrophosphoryl-undecaprenol N-acetylglucosamine transferase (353 aa).

UDP-N-acetyl-alpha-D-glucosamine-binding positions include 14–16, N126, R162, S190, I243, 262–267, and Q287; these read TGG and ALTVSE.

This sequence belongs to the glycosyltransferase 28 family. MurG subfamily.

Its subcellular location is the cell inner membrane. The enzyme catalyses di-trans,octa-cis-undecaprenyl diphospho-N-acetyl-alpha-D-muramoyl-L-alanyl-D-glutamyl-meso-2,6-diaminopimeloyl-D-alanyl-D-alanine + UDP-N-acetyl-alpha-D-glucosamine = di-trans,octa-cis-undecaprenyl diphospho-[N-acetyl-alpha-D-glucosaminyl-(1-&gt;4)]-N-acetyl-alpha-D-muramoyl-L-alanyl-D-glutamyl-meso-2,6-diaminopimeloyl-D-alanyl-D-alanine + UDP + H(+). Its pathway is cell wall biogenesis; peptidoglycan biosynthesis. Cell wall formation. Catalyzes the transfer of a GlcNAc subunit on undecaprenyl-pyrophosphoryl-MurNAc-pentapeptide (lipid intermediate I) to form undecaprenyl-pyrophosphoryl-MurNAc-(pentapeptide)GlcNAc (lipid intermediate II). The protein is UDP-N-acetylglucosamine--N-acetylmuramyl-(pentapeptide) pyrophosphoryl-undecaprenol N-acetylglucosamine transferase of Vibrio atlanticus (strain LGP32) (Vibrio splendidus (strain Mel32)).